Here is a 358-residue protein sequence, read N- to C-terminus: MATH domain and coiled-coil domain-containing protein At3g58440 (358 aa).

Residues 8–131 (QDKFTWVLEK…NDRLTIVAEV (124 aa)) enclose the MATH domain. The stretch at 250 to 309 (LRDAGFKVDWLEKKLDQLKEKKEEEMSGLARLHEIEERLQKLKLLFVDLESQLQKEKVEA) forms a coiled coil.

The protein is MATH domain and coiled-coil domain-containing protein At3g58440 of Arabidopsis thaliana (Mouse-ear cress).